We begin with the raw amino-acid sequence, 291 residues long: m-AAA protease-interacting protein 1, mitochondrial (291 aa).

Residues 1–96 constitute a mitochondrion transit peptide; sequence MALAVRLLPR…TFPSCPRRTY (96 aa).

In terms of assembly, interacts with AFG3L2. Interacts with SPG7. Interacts with SMDT1/EMRE (via the N-terminal transit peptide); interaction is direct and takes place before maturation of SMDT1/EMRE.

The protein localises to the mitochondrion matrix. Promotes sorting of SMDT1/EMRE in mitochondria by ensuring its maturation. Interacts with the transit peptide region of SMDT1/EMRE precursor protein in the mitochondrial matrix, leading to protect it against protein degradation by YME1L1, thereby ensuring SMDT1/EMRE maturation by the mitochondrial processing peptidase (PMPCA and PMPCB). The chain is m-AAA protease-interacting protein 1, mitochondrial from Bos taurus (Bovine).